The sequence spans 197 residues: UPF0319 protein VP0761 (197 aa).

An N-terminal signal peptide occupies residues 1–20 (MKKTTTLLGICAILSAPAFA).

This sequence belongs to the UPF0319 family.

This chain is UPF0319 protein VP0761, found in Vibrio parahaemolyticus serotype O3:K6 (strain RIMD 2210633).